Consider the following 257-residue polypeptide: Zinc finger protein 8 (257 aa).

3 disordered regions span residues 48-92 (GDNS…NNNN), 108-128 (QALGGHQNAHKRERQHAKRGS), and 214-238 (GVYSSSPASAFRSHEQETNKEPNNW). Residues 50–65 (NSDNLSAEPSDHQTTT) are compositionally biased toward polar residues. The span at 66-92 (KNDESSENIKDKDKEKDKDKDKDNNNN) shows a compositional bias: basic and acidic residues. The C2H2-type zinc-finger motif lies at 95 to 117 (FECHYCFRNFPTSQALGGHQNAH). Basic residues predominate over residues 115–126 (NAHKRERQHAKR).

As to expression, expressed in developing cauline leaves.

It is found in the nucleus. Functionally, probable transcription factor required for the initiation of inflorescence trichomes in response to gibberellin and cytokinin. Is not involved in the regulation of trichome branching. Is functionally equivalent to GIS2. Acts as a negative regulator of abscisic acid (ABA) signaling during germination and early seedling development. In Arabidopsis thaliana (Mouse-ear cress), this protein is Zinc finger protein 8.